We begin with the raw amino-acid sequence, 282 residues long: 3-oxoadipate CoA-transferase subunit A (282 aa).

It belongs to the 3-oxoacid CoA-transferase subunit A family. Heterotetramer composed of 2 A and 2 B subunits.

The enzyme catalyses 3-oxoadipate + succinyl-CoA = 3-oxoadipyl-CoA + succinate. The protein operates within aromatic compound metabolism; beta-ketoadipate pathway; acetyl-CoA and succinyl-CoA from 3-oxoadipate: step 1/2. Its function is as follows. Catalyzes the CoA transfer from succinate to 3-oxoadipate (beta-ketoadipate). In Pseudomonas knackmussii (strain DSM 6978 / CCUG 54928 / LMG 23759 / B13), this protein is 3-oxoadipate CoA-transferase subunit A (catI).